The chain runs to 60 residues: Conotoxin VnMRCL-012 (60 aa).

Residues 1-22 (MRCLPVFVILLLLIASAPGVDA) form the signal peptide. The propeptide occupies 23–50 (QPKTKYDVPLASRHDFAKKTPKRLSKPR).

The protein belongs to the conotoxin T superfamily. In terms of processing, contains 2 disulfide bonds that can be either 'C1-C3, C2-C4' or 'C1-C4, C2-C3', since these disulfide connectivities have been observed for conotoxins with cysteine framework V (for examples, see AC P0DQQ7 and AC P81755). In terms of tissue distribution, expressed by the venom duct.

The protein localises to the secreted. This Conus ventricosus (Mediterranean cone) protein is Conotoxin VnMRCL-012.